The chain runs to 756 residues: Hormone-sensitive lipase (756 aa).

The Involved in the stabilization of the negatively charged intermediate by the formation of the oxyanion hole motif lies at 350-352; it reads HGG. The active site involves Ser-424. Disordered stretches follow at residues 542-570 and 581-600; these read SVSKTEPMRRSVSEAALTQPEGSLGTDSL and RNSSDTTDTPELSLSAETLG. Position 552 is a phosphoserine; by PKA (Ser-552). Position 554 is a phosphoserine; by AMPK (Ser-554). Polar residues predominate over residues 581-596; it reads RNSSDTTDTPELSLSA. Phosphoserine occurs at positions 595 and 649. Active-site residues include Asp-692 and His-722.

It belongs to the 'GDXG' lipolytic enzyme family. As to quaternary structure, monomer and homodimer. Interacts with CAVIN1 in the adipocyte cytoplasm. Interacts with PLIN5. In terms of processing, phosphorylation by AMPK reduces its translocation towards the lipid droplets.

The protein resides in the cell membrane. It is found in the membrane. The protein localises to the caveola. It localises to the cytoplasm. Its subcellular location is the cytosol. The protein resides in the lipid droplet. It catalyses the reaction a diacylglycerol + H2O = a monoacylglycerol + a fatty acid + H(+). It carries out the reaction a triacylglycerol + H2O = a diacylglycerol + a fatty acid + H(+). The enzyme catalyses a monoacylglycerol + H2O = glycerol + a fatty acid + H(+). The catalysed reaction is Hydrolyzes glycerol monoesters of long-chain fatty acids.. It catalyses the reaction 1,2-di-(9Z-octadecenoyl)-glycerol + (9Z)-octadecenoate + H(+) = 1,2,3-tri-(9Z-octadecenoyl)-glycerol + H2O. It carries out the reaction 2,3-di-(9Z)-octadecenoyl-sn-glycerol + H2O = 2-(9Z-octadecenoyl)-glycerol + (9Z)-octadecenoate + H(+). The enzyme catalyses cholesteryl (9Z-octadecenoate) + H2O = cholesterol + (9Z)-octadecenoate + H(+). The catalysed reaction is 1,2,3-tri-(9Z-octadecenoyl)-glycerol + H2O = di-(9Z)-octadecenoylglycerol + (9Z)-octadecenoate + H(+). It catalyses the reaction all-trans-retinyl hexadecanoate + H2O = all-trans-retinol + hexadecanoate + H(+). It carries out the reaction 1,2-di-(9Z-octadecenoyl)-glycerol + H2O = (9Z-octadecenoyl)-glycerol + (9Z)-octadecenoate + H(+). The enzyme catalyses 2-(5Z,8Z,11Z,14Z-eicosatetraenoyl)-glycerol + H2O = glycerol + (5Z,8Z,11Z,14Z)-eicosatetraenoate + H(+). The catalysed reaction is 1-(9Z-octadecenoyl)-glycerol + H2O = glycerol + (9Z)-octadecenoate + H(+). It catalyses the reaction 2-(9Z-octadecenoyl)-glycerol + H2O = glycerol + (9Z)-octadecenoate + H(+). It carries out the reaction 1-O-hexadecyl-2-acetyl-sn-glycerol + H2O = 1-O-hexadecyl-sn-glycerol + acetate + H(+). The enzyme catalyses 1,2-di-(9Z-octadecenoyl)-sn-glycerol + H2O = (9Z-octadecenoyl)-glycerol + (9Z)-octadecenoate + H(+). The catalysed reaction is 1,3-di-(9Z-octadecenoyl)-glycerol + H2O = 1-(9Z-octadecenoyl)-glycerol + (9Z)-octadecenoate + H(+). It catalyses the reaction 1,2-di-(9Z-octadecenoyl)-glycerol + H2O = 2-(9Z-octadecenoyl)-glycerol + (9Z)-octadecenoate + H(+). Its pathway is glycerolipid metabolism; triacylglycerol degradation. In terms of biological role, lipase with broad substrate specificity, catalyzing the hydrolysis of triacylglycerols (TAGs), diacylglycerols (DAGs), monoacylglycerols (MAGs), cholesteryl esters and retinyl esters. Shows a preferential hydrolysis of DAGs over TAGs and MAGs. Preferentially hydrolyzes fatty acid (FA) esters at the sn-3 position of the glycerol backbone in DAGs and FA esters at the sn-1 and sn-2 positions of the glycerol backbone in TAGs. Catalyzes the hydrolysis of 2-arachidonoylglycerol, an endocannabinoid and of 2-acetyl monoalkylglycerol ether, the penultimate precursor of the pathway for de novo synthesis of platelet-activating factor. In adipose tissue and heart, it primarily hydrolyzes stored triglycerides to free fatty acids, while in steroidogenic tissues, it principally converts cholesteryl esters to free cholesterol for steroid hormone production. This chain is Hormone-sensitive lipase (LIPE), found in Bos taurus (Bovine).